Here is an 89-residue protein sequence, read N- to C-terminus: Protein RALF-like 5 (89 aa).

An N-terminal signal peptide occupies residues 1–25; it reads MLKAQVFMFVTVLVFVCVFINSNDA. 2 disulfide bridges follow: Cys39–Cys48 and Cys61–Cys67.

It belongs to the plant rapid alkalinization factor (RALF) family.

It localises to the secreted. Cell signaling peptide that may regulate plant stress, growth, and development. Mediates a rapid alkalinization of extracellular space by mediating a transient increase in the cytoplasmic Ca(2+) concentration leading to a calcium-dependent signaling events through a cell surface receptor and a concomitant activation of some intracellular mitogen-activated protein kinases. In Arabidopsis thaliana (Mouse-ear cress), this protein is Protein RALF-like 5 (RALFL5).